The chain runs to 313 residues: Methionyl-tRNA formyltransferase (313 aa).

113 to 116 (SLLP) contributes to the (6S)-5,6,7,8-tetrahydrofolate binding site.

The protein belongs to the Fmt family.

It carries out the reaction L-methionyl-tRNA(fMet) + (6R)-10-formyltetrahydrofolate = N-formyl-L-methionyl-tRNA(fMet) + (6S)-5,6,7,8-tetrahydrofolate + H(+). Its function is as follows. Attaches a formyl group to the free amino group of methionyl-tRNA(fMet). The formyl group appears to play a dual role in the initiator identity of N-formylmethionyl-tRNA by promoting its recognition by IF2 and preventing the misappropriation of this tRNA by the elongation apparatus. The protein is Methionyl-tRNA formyltransferase of Francisella tularensis subsp. novicida (strain U112).